Here is a 524-residue protein sequence, read N- to C-terminus: MVPQVLLFVLLLGFSLCFGKFPIYTIPDELGPWSPIDIHHLSCPNNLVVEDEGCTNLSEFSYMELKVGYISAIKVNGFTCTGVVTEAETYTNFVGYVTTTFKRKHFRPTPDACRAAYNWKMAGDPRYEESLHNPYPDYHWLRTVRTTKESLIIISPSVTDLDPYDKSLHSRVFPGRKCSGITVSSTYCSTNHDYTIWMPENPRPRTPCDIFTNSRGKRASNGNKTCGFVDERGLYKSLKGACRLKLCGVLGLRLMDGTWVAMQTSGETKWCPPDQLVNLHDFRSDEIEHLVVEELVKKREECLDALESIMTTKSVSFRRLSHLRKLVPGFGKAYTIFNKTLMEADAHYKSVRTWNEIIPSKGCLKVGGRCHPHVNGVFFNGLILGPDDHVLIPEMQSSLLQQHMELLESSVIPLMHPLADPSTVFKEGDEAEDFVEVHLPDVYKQISGVDLGLPNWGKYVLMTAGAMIGLVLIFSLMTWCRRANRPESKQRSFGGTGGNVSVTSQSGKVIPSWESYKSGGEIRL.

An N-terminal signal peptide occupies residues 1-19 (MVPQVLLFVLLLGFSLCFG). Residues 20–459 (KFPIYTIPDE…DLGLPNWGKY (440 aa)) are Virion surface-facing. Disulfide bonds link C43/C302, C54/C226, C80/C113, C178/C188, C208/C247, and C242/C271. N56 is a glycosylation site (N-linked (GlcNAc...) asparagine; by host). The N-linked (GlcNAc...) asparagine; by host glycan is linked to N223. N338 carries an N-linked (GlcNAc...) asparagine; by host glycan. Cysteines 363 and 370 form a disulfide. The helical transmembrane segment at 460–480 (VLMTAGAMIGLVLIFSLMTWC) threads the bilayer. C480 is lipidated: S-palmitoyl cysteine; by host. Residues 481-524 (RRANRPESKQRSFGGTGGNVSVTSQSGKVIPSWESYKSGGEIRL) lie on the Intravirion side of the membrane. The interval 487 to 506 (ESKQRSFGGTGGNVSVTSQS) is disordered.

This sequence belongs to the lyssavirus glycoprotein family. As to quaternary structure, homotrimer. Interacts with matrix protein. Interacts with host TRFC. Interacts with host BST2; this interaction inhibits viral budding by tethering new virions to the cell surface. Interacts with ITGB1. Interacts with host GRM2. Glycosylated and palmitoylated by host. Glycosylation is crucial for glycoprotein export at the cell surface.

The protein localises to the virion membrane. Attaches the virus to host cellular receptor, inducing endocytosis of the virion by using different host proteins including TFRC, GRM2 and ITGB1. In the endosome, the acidic pH induces conformational changes in the glycoprotein trimer, which trigger fusion between virus and cell membrane. There is convincing in vitro evidence that the muscular form of the nicotinic acetylcholine receptor (nAChR), the neuronal cell adhesion molecule (NCAM), and the p75 neurotrophin receptor (p75NTR) bind glycoprotein and thereby facilitate rabies virus entry into cells. In Homo sapiens (Human), this protein is Glycoprotein (G).